The primary structure comprises 216 residues: Protein-L-isoaspartate O-methyltransferase (216 aa).

The active site involves S64.

Belongs to the methyltransferase superfamily. L-isoaspartyl/D-aspartyl protein methyltransferase family.

It is found in the cytoplasm. It catalyses the reaction [protein]-L-isoaspartate + S-adenosyl-L-methionine = [protein]-L-isoaspartate alpha-methyl ester + S-adenosyl-L-homocysteine. Its function is as follows. Catalyzes the methyl esterification of L-isoaspartyl residues in peptides and proteins that result from spontaneous decomposition of normal L-aspartyl and L-asparaginyl residues. It plays a role in the repair and/or degradation of damaged proteins. This chain is Protein-L-isoaspartate O-methyltransferase, found in Paracoccus denitrificans (strain Pd 1222).